Consider the following 280-residue polypeptide: Thymidylate synthase (280 aa).

R21 lines the dUMP pocket. A (6R)-5,10-methylene-5,6,7,8-tetrahydrofolate-binding site is contributed by H51. R142–R143 provides a ligand contact to dUMP. The active-site Nucleophile is the C162. DUMP is bound by residues R182–D185, N193, and H223–Y225. D185 contributes to the (6R)-5,10-methylene-5,6,7,8-tetrahydrofolate binding site. A279 provides a ligand contact to (6R)-5,10-methylene-5,6,7,8-tetrahydrofolate.

This sequence belongs to the thymidylate synthase family. Bacterial-type ThyA subfamily. As to quaternary structure, homodimer.

Its subcellular location is the cytoplasm. The enzyme catalyses dUMP + (6R)-5,10-methylene-5,6,7,8-tetrahydrofolate = 7,8-dihydrofolate + dTMP. The protein operates within pyrimidine metabolism; dTTP biosynthesis. Catalyzes the reductive methylation of 2'-deoxyuridine-5'-monophosphate (dUMP) to 2'-deoxythymidine-5'-monophosphate (dTMP) while utilizing 5,10-methylenetetrahydrofolate (mTHF) as the methyl donor and reductant in the reaction, yielding dihydrofolate (DHF) as a by-product. This enzymatic reaction provides an intracellular de novo source of dTMP, an essential precursor for DNA biosynthesis. In Acinetobacter baumannii (strain AB307-0294), this protein is Thymidylate synthase.